The primary structure comprises 356 residues: Phospho-N-acetylmuramoyl-pentapeptide-transferase (356 aa).

10 consecutive transmembrane segments (helical) span residues 25–45, 70–90, 93–113, 138–158, 164–184, 195–215, 235–255, 258–278, 284–304, and 333–353; these read TIAA…SIIA, GTPT…AFLW, LSNI…AIGF, FFVA…GFAL, YLIH…VATG, GLAI…AYLC, LAVL…FNAP, AIFM…TVAV, IVLV…VIQV, and QVVI…LSTL.

This sequence belongs to the glycosyltransferase 4 family. MraY subfamily. Mg(2+) serves as cofactor.

It localises to the cell inner membrane. It carries out the reaction UDP-N-acetyl-alpha-D-muramoyl-L-alanyl-gamma-D-glutamyl-meso-2,6-diaminopimeloyl-D-alanyl-D-alanine + di-trans,octa-cis-undecaprenyl phosphate = di-trans,octa-cis-undecaprenyl diphospho-N-acetyl-alpha-D-muramoyl-L-alanyl-D-glutamyl-meso-2,6-diaminopimeloyl-D-alanyl-D-alanine + UMP. The protein operates within cell wall biogenesis; peptidoglycan biosynthesis. Its function is as follows. Catalyzes the initial step of the lipid cycle reactions in the biosynthesis of the cell wall peptidoglycan: transfers peptidoglycan precursor phospho-MurNAc-pentapeptide from UDP-MurNAc-pentapeptide onto the lipid carrier undecaprenyl phosphate, yielding undecaprenyl-pyrophosphoryl-MurNAc-pentapeptide, known as lipid I. The chain is Phospho-N-acetylmuramoyl-pentapeptide-transferase from Bartonella tribocorum (strain CIP 105476 / IBS 506).